Consider the following 252-residue polypeptide: Transcription factor bHLH117 (252 aa).

A disordered region spans residues 103 to 141; sequence LFPSLSPPLPAAKRQKLNSTSSSTTSGSPTASNDGGIIT. The segment covering 121-134 has biased composition (low complexity); it reads STSSSTTSGSPTAS. The bHLH domain maps to 130–179; it reads SPTASNDGGIITKRRKISDKIRSLEKLMPWERKMNLAMTLEESHKYIKFL.

In terms of assembly, homodimer.

The protein resides in the nucleus. The sequence is that of Transcription factor bHLH117 (BHLH117) from Arabidopsis thaliana (Mouse-ear cress).